A 518-amino-acid chain; its full sequence is Serine/threonine-protein kinase PRR1 (518 aa).

Met-1 bears the N-acetylmethionine mark. Polar residues predominate over residues 1-12; that stretch reads MDEYSSIYSQPK. Residues 1–59 form a disordered region; it reads MDEYSSIYSQPKTPRLKQEGFPDSIGDQHEKALIDENGEEDKKMASTEGTTGDSRSTPL. Basic and acidic residues predominate over residues 16-45; the sequence is LKQEGFPDSIGDQHEKALIDENGEEDKKMA. A compositionally biased stretch (polar residues) spans 47 to 59; the sequence is TEGTTGDSRSTPL. Residue Ser-132 is modified to Phosphoserine. Residues 192-508 enclose the Protein kinase domain; that stretch reads WKKVRPIGSG…INEIYESPFV (317 aa). ATP-binding positions include 198–206 and Lys-225; that span reads IGSGNFSTV. Residue Asp-354 is the Proton acceptor of the active site.

This sequence belongs to the protein kinase superfamily. CAMK Ser/Thr protein kinase family. NIM1 subfamily.

The protein localises to the cytoplasm. It carries out the reaction L-seryl-[protein] + ATP = O-phospho-L-seryl-[protein] + ADP + H(+). The catalysed reaction is L-threonyl-[protein] + ATP = O-phospho-L-threonyl-[protein] + ADP + H(+). In terms of biological role, protein kinase that functions as a regulator in the pheromone-induced mating pathway downstream of mitogen-activated protein kinase (MAPK) FUS3. Diminishes transcriptional induction of genes in response to pheromone signaling. This chain is Serine/threonine-protein kinase PRR1 (PRR1), found in Saccharomyces cerevisiae (strain ATCC 204508 / S288c) (Baker's yeast).